Here is a 51-residue protein sequence, read N- to C-terminus: Large ribosomal subunit protein eL39z/eL39x (51 aa).

Residues 1–21 form a disordered region; that stretch reads MPSHKSFMIKKKLGKKMRQNR. The span at 7 to 19 shows a compositional bias: basic residues; the sequence is FMIKKKLGKKMRQ.

It belongs to the eukaryotic ribosomal protein eL39 family.

The protein is Large ribosomal subunit protein eL39z/eL39x (RPL39A) of Arabidopsis thaliana (Mouse-ear cress).